Here is a 364-residue protein sequence, read N- to C-terminus: Transcription factor IIIA (364 aa).

9 C2H2-type zinc fingers span residues 38–62, 68–92, 98–123, 130–154, 160–184, 187–211, 215–237, 244–269, and 275–299; these read FICSFPDCSASYNKAWKLDAHLCKH, FVCDYEGCGKAFIRDYHLSRHVLIH, FVCADDGCNQKFNTKSNLKKHIERKH, YVCSYEGCKKAFKKHQQLRTHQCQH, FRCTHEGCGKHFASPSRLKRHGKVH, YLCQKGCSFMGKTWTELLKHMREAH, ITCNVCQRMFKRRDYLKQHMKTH, YRCPRQGCGRTYTTVFNLQSHILSFH, and FVCEHAGCGKTFAMKQSLMRHSVVH. A disordered region spans residues 299 to 364; the sequence is HDPDKKRMKL…PPPAALLTVC (66 aa). Positions 338–352 are enriched in low complexity; that stretch reads SLPNASAESSSSPEA.

The protein resides in the nucleus. In terms of biological role, involved in ribosomal large subunit biogenesis. Binds the approximately 50 base pairs internal control region (ICR) of 5S ribosomal RNA genes. It is required for their RNA polymerase III-dependent transcription and may also maintain the transcription of other genes. Also binds the transcribed 5S RNA's. In Mus musculus (Mouse), this protein is Transcription factor IIIA (Gtf3a).